Here is a 368-residue protein sequence, read N- to C-terminus: Chaperone protein DnaJ (368 aa).

Residues 5-69 form the J domain; it reads DYYEVLGLDK…QKRAQYDRFG (65 aa). The CR-type zinc finger occupies 126-208; that stretch reads GKTETIELEI…CHGSGHVKKK (83 aa). Residues Cys-139, Cys-142, Cys-156, Cys-159, Cys-182, Cys-185, Cys-196, and Cys-199 each coordinate Zn(2+). CXXCXGXG motif repeat units lie at residues 139-146, 156-163, 182-189, and 196-203; these read CDTCMGSG, CNRCGGSG, CSQCHGSG, and CPTCHGSG.

The protein belongs to the DnaJ family. In terms of assembly, homodimer. The cofactor is Zn(2+).

Its subcellular location is the cytoplasm. In terms of biological role, participates actively in the response to hyperosmotic and heat shock by preventing the aggregation of stress-denatured proteins and by disaggregating proteins, also in an autonomous, DnaK-independent fashion. Unfolded proteins bind initially to DnaJ; upon interaction with the DnaJ-bound protein, DnaK hydrolyzes its bound ATP, resulting in the formation of a stable complex. GrpE releases ADP from DnaK; ATP binding to DnaK triggers the release of the substrate protein, thus completing the reaction cycle. Several rounds of ATP-dependent interactions between DnaJ, DnaK and GrpE are required for fully efficient folding. Also involved, together with DnaK and GrpE, in the DNA replication of plasmids through activation of initiation proteins. This chain is Chaperone protein DnaJ, found in Exiguobacterium sp. (strain ATCC BAA-1283 / AT1b).